A 257-amino-acid polypeptide reads, in one-letter code: MEFPDLGAHCSEPSCQRLDFLPLKCDACSGIFCADHVAYAHHHCGSAYQKDIQVPVCPLCNVPVPVARGEPPDRAVGEHIDRDCRSDPAQQKRKIFTNKCERSGCRQREMMKLTCDRCGRNFCIKHRHPLDHDCSGEGHPTSRAGLAAISRAQGLASTSTVPSPSRTLPSSSSPSRATPQLPPRTTSPVIALQNGLSEDEALQRALELSLAEAKPQIPSSQEEEDLALAQALSASEAEYQQQQAQSRSLKPSNCSLC.

2 AN1-type zinc fingers span residues 4–52 and 94–142; these read PDLG…QKDI and KIFT…HPTS. Zn(2+)-binding residues include Cys10, Cys15, Cys25, Cys28, Cys33, His36, His42, Cys44, Cys100, Cys105, Cys115, Cys118, Cys123, His126, His132, and Cys134. The interval 141–151 is VCP/p97-interacting motif (VIM); the sequence is TSRAGLAAISR. Residues 153–187 form a disordered region; that stretch reads QGLASTSTVPSPSRTLPSSSSPSRATPQLPPRTTS. Positions 156-179 are enriched in low complexity; the sequence is ASTSTVPSPSRTLPSSSSPSRATP. Phosphoserine is present on residues Ser163, Ser173, and Ser187. 2 UIM domains span residues 197–216 and 221–240; these read SEDEALQRALELSLAEAKPQ and QEEEDLALAQALSASEAEYQ. Cys254 carries the cysteine methyl ester modification. A lipid anchor (S-geranylgeranyl cysteine) is attached at Cys254. Positions 254-257 match the CAAX motif motif; that stretch reads CSLC. Residues 255-257 constitute a propeptide, removed in mature form; it reads SLC.

Binds 'Lys-48'-linked polyubiquitin chains of ubiquitinated proteins. Associates with the proteasome complex; upon exposure to arsenite. Interacts (via VIM motif) with VCP; the interaction is direct. Interacts with BAG6. Interacts with IGF1R (nascent precursor form). Interacts with DERL1, FAF2, NPLOC4 and UFD1; probably through VCP. In terms of processing, phosphorylated by MAPK14. Phosphorylation has no effect on association with the proteasome complex.

Its subcellular location is the endoplasmic reticulum membrane. In terms of biological role, plays a role in protein homeostasis by regulating both the translocation and the ubiquitin-mediated proteasomal degradation of nascent proteins at the endoplasmic reticulum. It is involved in the regulation of signal-mediated translocation of proteins into the endoplasmic reticulum. It also plays a role in the ubiquitin-mediated proteasomal degradation of proteins for which signal-mediated translocation to the endoplasmic reticulum has failed. May therefore function in the endoplasmic reticulum stress-induced pre-emptive quality control, a mechanism that selectively attenuates the translocation of newly synthesized proteins into the endoplasmic reticulum and reroutes them to the cytosol for proteasomal degradation. By controlling the steady-state expression of the IGF1R receptor, indirectly regulates the insulin-like growth factor receptor signaling pathway. The sequence is that of AN1-type zinc finger protein 2B from Rattus norvegicus (Rat).